The chain runs to 820 residues: MKMLLLLHCLGVFLSCSGHIQDEHPQYHSPPDVVIPVRITGTTRGMTPPGWLSYILPFGGQKHIIHIKVKKLLFSKHLPVFTYTDQGAILEDQPFVQNNCYYHGYVEGDPESLVSLSTCFGGFQGILQINDFAYEIKPLAFSTTFEHLVYKMDSEEKQFSTMRSGFMQNEITCRMEFEEIDNSTQKQSSYVGWWIHFRIVEIVVVIDNYLYIRYERNDSKLLEDLYVIVNIVDSILDVIGVKVLLFGLEIWTNKNLIVVDDVRKSVHLYCKWKSENITPRMQHDTSHLFTTLGLRGLSGIGAFRGMCTPHRSCAIVTFMNKTLGTFSIAVAHHLGHNLGMNHDEDTCRCSQPRCIMHEGNPPITKFSNCSYGDFWEYTVERTKCLLETVHTKDIFNVKRCGNGVVEEGEECDCGPLKHCAKDPCCLSNCTLTDGSTCAFGLCCKDCKFLPSGKVCRKEVNECDLPEWCNGTSHKCPDDFYVEDGIPCKERGYCYEKSCHDRNEQCRRIFGAGANTASETCYKELNTLGDRVGHCGIKNATYIKCNISDVQCGRIQCENVTEIPNMSDHTTVHWARFNDIMCWSTDYHLGMKGPDIGEVKDGTECGIDHICIHRHCVHITILNSNCSPAFCNKRGICNNKHHCHCNYLWDPPNCLIKGYGGSVDSGPPPKRKKKKKFCYLCILLLIVLFILLCCLYRLCKKSKPIKKQQDVQTPSAKEEEKIQRRPHELPPQSQPWVMPSQSQPPVTPSQSHPQVMPSQSQPPVTPSQSQPRVMPSQSQPPVMPSQSHPQLTPSQSQPPVTPSQRQPQLMPSQSQPPVTPS.

An N-terminal signal peptide occupies residues 1–18 (MKMLLLLHCLGVFLSCSG). The propeptide occupies 19–193 (HIQDEHPQYH…TQKQSSYVGW (175 aa)). Topologically, residues 194–674 (WIHFRIVEIV…GPPPKRKKKK (481 aa)) are extracellular. The region spanning 198 to 390 (RIVEIVVVID…RTKCLLETVH (193 aa)) is the Peptidase M12B domain. N-linked (GlcNAc...) asparagine glycans are attached at residues Asn-217 and Asn-320. Intrachain disulfides connect Cys-307/Cys-384, Cys-347/Cys-369, and Cys-349/Cys-354. N-linked (GlcNAc...) asparagine glycans are attached at residues Asn-368, Asn-428, Asn-469, Asn-538, Asn-545, Asn-558, and Asn-564. The region spanning 397-483 (VKRCGNGVVE…KCPDDFYVED (87 aa)) is the Disintegrin domain. Residues Cys-455 and Cys-475 are joined by a disulfide bond. 3 disulfide bridges follow: Cys-625/Cys-636, Cys-630/Cys-642, and Cys-644/Cys-653. One can recognise an EGF-like domain in the interval 625–654 (CSPAFCNKRGICNNKHHCHCNYLWDPPNCL). The helical transmembrane segment at 675–695 (KFCYLCILLLIVLFILLCCLY) threads the bilayer. The Cytoplasmic portion of the chain corresponds to 696 to 820 (RLCKKSKPIK…SQSQPPVTPS (125 aa)). A disordered region spans residues 706-820 (KQQDVQTPSA…SQSQPPVTPS (115 aa)). Over residues 715–727 (AKEEEKIQRRPHE) the composition is skewed to basic and acidic residues. The span at 738-820 (PSQSQPPVTP…SQSQPPVTPS (83 aa)) shows a compositional bias: low complexity. Repeat copies occupy residues 739 to 747 (SQSQPPVTP), 748 to 756 (SQSHPQVMP), 757 to 765 (SQSQPPVTP), 766 to 774 (SQSQPRVMP), 775 to 783 (SQSQPPVMP), 784 to 792 (SQSHPQLTP), 793 to 801 (SQSQPPVTP), 802 to 810 (SQRQPQLMP), and 811 to 819 (SQSQPPVTP). Residues 739–819 (SQSQPPVTPS…PSQSQPPVTP (81 aa)) form a 9 X 9 AA approximate repeats region.

In terms of tissue distribution, expressed specifically in testes.

It localises to the membrane. Its function is as follows. May be involved in spermatogenesis and fertilization. Seems to be a non catalytic metalloprotease-like protein. This Homo sapiens (Human) protein is Disintegrin and metalloproteinase domain-containing protein 29 (ADAM29).